Consider the following 130-residue polypeptide: Small ribosomal subunit protein uS8 (130 aa).

The protein belongs to the universal ribosomal protein uS8 family. Part of the 30S ribosomal subunit. Contacts proteins S5 and S12.

Functionally, one of the primary rRNA binding proteins, it binds directly to 16S rRNA central domain where it helps coordinate assembly of the platform of the 30S subunit. This is Small ribosomal subunit protein uS8 from Pectobacterium carotovorum subsp. carotovorum (strain PC1).